Consider the following 178-residue polypeptide: MNVPNLLSLSRLILSPLILYFVLEENYLSSLVLVLFLALMDFLDGFFARKLNQSTRMGKILDPLADKVFTFFSLLSYTFFSKERLNPLIFFLLLGRDITLIIGGIFLIKRKFTPEPSIYGKFTTLFVSLSLLSVGILNVYDVNFLRILTNVLEIVSLILILVSWVDYTLKGFKMIFKE.

The next 4 helical transmembrane spans lie at 28-48 (LSSL…GFFA), 88-108 (LIFF…IFLI), 125-145 (LFVS…VNFL), and 147-167 (ILTN…WVDY).

This sequence belongs to the CDP-alcohol phosphatidyltransferase class-I family.

The protein localises to the cell membrane. The catalysed reaction is a CDP-1,2-diacyl-sn-glycerol + sn-glycerol 3-phosphate = a 1,2-diacyl-sn-glycero-3-phospho-(1'-sn-glycero-3'-phosphate) + CMP + H(+). It participates in phospholipid metabolism; phosphatidylglycerol biosynthesis; phosphatidylglycerol from CDP-diacylglycerol: step 1/2. Its function is as follows. This protein catalyzes the committed step to the synthesis of the acidic phospholipids. This Aquifex aeolicus (strain VF5) protein is CDP-diacylglycerol--glycerol-3-phosphate 3-phosphatidyltransferase (pgsA).